The primary structure comprises 311 residues: Ribonuclease Z (311 aa).

His-61, His-63, Asp-65, His-66, His-137, Asp-207, and His-263 together coordinate Zn(2+). The Proton acceptor role is filled by Asp-65.

This sequence belongs to the RNase Z family. In terms of assembly, homodimer. The cofactor is Zn(2+).

It carries out the reaction Endonucleolytic cleavage of RNA, removing extra 3' nucleotides from tRNA precursor, generating 3' termini of tRNAs. A 3'-hydroxy group is left at the tRNA terminus and a 5'-phosphoryl group is left at the trailer molecule.. Functionally, zinc phosphodiesterase, which displays some tRNA 3'-processing endonuclease activity. Probably involved in tRNA maturation, by removing a 3'-trailer from precursor tRNA. This Thermococcus onnurineus (strain NA1) protein is Ribonuclease Z.